A 1663-amino-acid chain; its full sequence is Complement C3 (1663 aa).

An N-terminal signal peptide occupies residues 1–22; sequence MGPTSGPSLLLLLLTHLPLALG. Phosphoserine; by FAM20C occurs at positions 38 and 70. An N-linked (GlcNAc...) asparagine glycan is attached at asparagine 85. Phosphoserine; by FAM20C occurs at positions 297 and 303. 13 disulfide bridges follow: cysteine 559/cysteine 816, cysteine 627/cysteine 662, cysteine 693/cysteine 720, cysteine 694/cysteine 727, cysteine 707/cysteine 728, cysteine 873/cysteine 1513, cysteine 1101/cysteine 1158, cysteine 1358/cysteine 1489, cysteine 1389/cysteine 1458, cysteine 1506/cysteine 1511, cysteine 1518/cysteine 1590, cysteine 1537/cysteine 1661, and cysteine 1637/cysteine 1646. Serine 672 carries the post-translational modification Phosphoserine; by FAM20C. The 36-residue stretch at 693 to 728 folds into the Anaphylatoxin-like domain; it reads CCEDGMRENPMRFSCQRRTRFISLGEACKKVFLDCC. Asparagine 939 carries an N-linked (GlcNAc...) asparagine glycan. Residues 954–973 are disordered; the sequence is REGVQKEDIPPADLSDQVPD. Phosphoserine; by FAM20C is present on serine 968. Residues 1010-1013 constitute a cross-link (isoglutamyl cysteine thioester (Cys-Gln)); it reads CGEQ. Serine 1321 carries the phosphoserine; by FAM20C modification. One can recognise an NTR domain in the interval 1518 to 1661; that stretch reads CFIQKSDDKV…FTESMVVFGC (144 aa). Serine 1573 bears the Phosphoserine; by FAM20C mark. Asparagine 1617 is a glycosylation site (N-linked (GlcNAc...) asparagine). Positions 1634–1659 are interaction with CFP/properdin; that stretch reads EDECQDEENQKQCQDLGAFTESMVVF.

In terms of assembly, in absence of complement activation, the C3 precursor is first processed by the removal of 4 Arg residues, forming two chains, beta and alpha, linked by a disulfide bond. As to quaternary structure, complement C3b is composed of complement C3b and complement C3 beta chains that are associated via disulfide bonds. Non-enzymatic component of the C5 convertase, also named C4bC2bC3b, composed of the serine protease complement C2b (C2), complement C3b, as well as complement C4b (C4). Non-enzymatic component of the C5 convertase of the alternative complement pathways composed of the serine protease complement CFB and complement C3b. Interacts with CFP; interaction takes place together with CFB in the alternative complement system and allows the complex to become active. Interacts with CR1 (via Sushi 8 and Sushi 9 domains). Interacts with CFH. Interacts with CFH. Interacts with CR2. In terms of assembly, during pregnancy, C3dg exists as a complex (probably a 2:2:2 heterohexamer) with AGT and the proform of PRG2. Interacts with CR2 (via the N-terminal Sushi domains 1 and 2). As to quaternary structure, (Microbial infection) C3b interacts with herpes simplex virus 1 (HHV-1) and herpes simplex virus 2 (HHV-2) envelope glycoprotein C; this interaction inhibits the activation of the complement system. (Microbial infection) Interacts with Staphylococcus aureus immunoglobulin-binding protein Sbi; this interaction prevents the association between C3dg and CR2. In terms of assembly, (Microbial infection) Interacts with Staphylococcus aureus protein Fib. Post-translationally, C3 precursor is first processed by the removal of 4 Arg residues, forming two chains, beta and alpha, linked by a disulfide bond. During activation of the complement systems, the alpha chain is cleaved into C3a and C3b by the C3 convertase: C3b stays linked to the beta chain, while C3a is released in the plasma. The alpha chain is cleaved by the serine protease complement C2b component of the C3 convertase to generate C3a and C3b following activation by the classical, lectin and GZMK complement systems. The alpha chain is cleaved by CFB component of the C3 convertase to generate C3a and C3b following activation by the alternative complement system. C3a is further processed by carboxypeptidases to release the C-terminal arginine residue generating the acylation stimulating protein (ASP). Levels of ASP are increased in adipocytes in the postprandial period and by insulin and dietary chylomicrons. In terms of processing, complement C3b is rapidly split in two positions by factor I (CFI) and a cofactor (CFH) to form iC3b (inactivated C3b) and C3f which is released. CFI and CFH catalyze proteolytic degradation of already-deposited complement C3b. Then iC3b is slowly cleaved (possibly by CFI) to form C3c (beta chain + alpha' chain fragment 1 + alpha' chain fragment 2), C3dg and C3f. Other proteases produce other fragments such as C3d or C3g. Post-translationally, upon activation, the internal thioester bond reacts with carbohydrate antigens on the target surface to form amide or ester bonds, leading to covalent association with the surface of pathogens. Complement C3b interacts with complement C4b via a thioester linkage. In terms of processing, phosphorylated by FAM20C in the extracellular medium. Post-translationally, (Microbial infection) C3 is cleaved by Staphylococcus aureus aureolysin; this cleavage renders C3a and C3b inactive. C3b is rapidly degraded by host factors CFH and CFI preventing its deposition on the bacterial surface while C3a is further inactivated by aureolysin. (Microbial infection) Complement C3 beta chain is cleaved and inactivated by S.pyogenes SpeB. In terms of processing, (Microbial infection) Cleaved by N.meningitidis NalP between Leu-744 and Gly-745, generating a slightly shorter C3 alpha form and a slightly longer C3 beta form. The C3b-like fragment is degraded in the presence of the complement regulators CFH and CFI, preventing its deposition on the bacterial surface. Plasma. In terms of tissue distribution, produced in adipocytes and released into the plasma during both the fasting and postprandial periods.

The protein resides in the secreted. It is found in the cell surface. Its activity is regulated as follows. Complement activation is inhibited by VSIG4. Precursor of non-enzymatic components of the classical, alternative, lectin and GZMK complement pathways, which consist in a cascade of proteins that leads to phagocytosis and breakdown of pathogens and signaling that strengthens the adaptive immune system. In terms of biological role, non-enzymatic component of C5 convertase. Generated following cleavage by C3 convertase, it covalently attaches to the surface of pathogens, where it acts as an opsonin that marks the surface of antigens for removal. Complement C3b binds covalently via its reactive thioester, to cell surface carbohydrates or immune aggregates. Together with complement C4b, it then recruits the serine protease complement C2b to form the C5 convertase, which cleaves and activate C5, the next component of the complement pathways. In the alternative complement pathway, recruits the serine protease CFB to form the C5 convertase that cleaves and activates C5. Functionally, mediator of local inflammatory process released following cleavage by C3 convertase. Acts by binding to its receptor, C3AR1, activating G protein-coupled receptor signaling, promoting the phosphorylation, ARRB2-mediated internalization and endocytosis of C3AR1. C3a anaphylatoxin stimulates the activation of immune cells such as mast cells and basophilic leukocytes to release inflammation agents, such as cytokines, chemokines and histamine, which promote inflammation development. Also acts as potent chemoattractant for the migration of macrophages and neutrophils to the inflamed tissues, resulting in neutralization of the inflammatory triggers by multiple ways, such as phagocytosis and generation of reactive oxidants. Its function is as follows. Adipogenic hormone that stimulates triglyceride synthesis and glucose transport in adipocytes, regulating fat storage and playing a role in postprandial triglyceride clearance. Appears to stimulate triglyceride synthesis via activation of the PLC, MAPK and AKT signaling pathways. Acts by binding to its receptor, C5AR2, activating G protein-coupled receptor signaling, promoting the phosphorylation, ARRB2-mediated internalization and endocytosis of C5AR2. Acts as a chemoattractant for neutrophils in chronic inflammation. This is Complement C3 from Homo sapiens (Human).